Consider the following 407-residue polypeptide: Probable succinyl-diaminopimelate desuccinylase (407 aa).

Histidine 72 contributes to the Zn(2+) binding site. Aspartate 74 is a catalytic residue. Zn(2+) is bound at residue aspartate 105. Glutamate 139 (proton acceptor) is an active-site residue. The Zn(2+) site is built by glutamate 140, glutamate 165, and histidine 378.

This sequence belongs to the peptidase M20A family. Requires Zn(2+) as cofactor. It depends on Co(2+) as a cofactor.

The enzyme catalyses N-succinyl-(2S,6S)-2,6-diaminopimelate + H2O = (2S,6S)-2,6-diaminopimelate + succinate. The protein operates within amino-acid biosynthesis; L-lysine biosynthesis via DAP pathway; LL-2,6-diaminopimelate from (S)-tetrahydrodipicolinate (succinylase route): step 3/3. This chain is Probable succinyl-diaminopimelate desuccinylase (dapE), found in Staphylococcus aureus (strain MRSA252).